Here is a 439-residue protein sequence, read N- to C-terminus: Xaa-Pro dipeptidase (439 aa).

Residues D244, D255, H335, E380, and E418 each coordinate Mn(2+).

Belongs to the peptidase M24B family. Bacterial-type prolidase subfamily. Mn(2+) serves as cofactor.

The enzyme catalyses Xaa-L-Pro dipeptide + H2O = an L-alpha-amino acid + L-proline. Its function is as follows. Splits dipeptides with a prolyl residue in the C-terminal position. This is Xaa-Pro dipeptidase from Shewanella frigidimarina (strain NCIMB 400).